The sequence spans 156 residues: Small ribosomal subunit protein uS7 (156 aa).

This sequence belongs to the universal ribosomal protein uS7 family. In terms of assembly, part of the 30S ribosomal subunit. Contacts proteins S9 and S11.

Functionally, one of the primary rRNA binding proteins, it binds directly to 16S rRNA where it nucleates assembly of the head domain of the 30S subunit. Is located at the subunit interface close to the decoding center, probably blocks exit of the E-site tRNA. The sequence is that of Small ribosomal subunit protein uS7 from Prochlorococcus marinus (strain NATL2A).